The chain runs to 501 residues: MTIASDAWQALADWQPQKLTDLVAADPDARLQALVRNVADIRFDFAKTHLDAAAIAILANLAEAQDFGGRRKTLFSGGIANPTENRAAEHSAERGDGAPESVHAAQALHQRMRMMIDAIEAGAFGEIRHLLHIGIGGSALGPDLLVDALGRHSDRYDVAVVSNVDGAALDEAFAKFSPEHTLVAVASKTFTTTETLLNANSALQWLDEAGVADPVGRFIALTANPGRAMEWGIDETRILPFSETVGGRYSLWSSIGFPAALALGWDAFADLLEGAAEMDRHFRLADGADNICLLAAFADQVYANRLGCQTRAVFAYDERLRLLPAYLQQLEMESNGKSVTLDGAPLAQHSAPVTWGGVGTDAQHAVFQLLHQGTHLVPVEFIVAREPDHLLDDAHHETLVANCIAQGAALMAGRASDDRARAYPGDRPSTTILLDQVSPRSLGALIAFYEHRVFANAVLLGVNPFDQFGVELGKEMAKGLAEGTVDFDPATQALMKAALGD.

The segment at 78–101 (GIANPTENRAAEHSAERGDGAPES) is disordered. The span at 86–97 (RAAEHSAERGDG) shows a compositional bias: basic and acidic residues. E333 (proton donor) is an active-site residue. Catalysis depends on residues H364 and K474.

This sequence belongs to the GPI family.

The protein resides in the cytoplasm. The enzyme catalyses alpha-D-glucose 6-phosphate = beta-D-fructose 6-phosphate. The protein operates within carbohydrate biosynthesis; gluconeogenesis. It participates in carbohydrate degradation; glycolysis; D-glyceraldehyde 3-phosphate and glycerone phosphate from D-glucose: step 2/4. Functionally, catalyzes the reversible isomerization of glucose-6-phosphate to fructose-6-phosphate. In Sphingopyxis alaskensis (strain DSM 13593 / LMG 18877 / RB2256) (Sphingomonas alaskensis), this protein is Glucose-6-phosphate isomerase.